A 329-amino-acid polypeptide reads, in one-letter code: Lipoyl synthase (329 aa).

7 residues coordinate [4Fe-4S] cluster: C72, C77, C83, C98, C102, C105, and S313. Residues 83-303 (CWSHGTATIM…QIGLKKGFFE (221 aa)) enclose the Radical SAM core domain.

Belongs to the radical SAM superfamily. Lipoyl synthase family. It depends on [4Fe-4S] cluster as a cofactor.

It is found in the cytoplasm. The enzyme catalyses [[Fe-S] cluster scaffold protein carrying a second [4Fe-4S](2+) cluster] + N(6)-octanoyl-L-lysyl-[protein] + 2 oxidized [2Fe-2S]-[ferredoxin] + 2 S-adenosyl-L-methionine + 4 H(+) = [[Fe-S] cluster scaffold protein] + N(6)-[(R)-dihydrolipoyl]-L-lysyl-[protein] + 4 Fe(3+) + 2 hydrogen sulfide + 2 5'-deoxyadenosine + 2 L-methionine + 2 reduced [2Fe-2S]-[ferredoxin]. It participates in protein modification; protein lipoylation via endogenous pathway; protein N(6)-(lipoyl)lysine from octanoyl-[acyl-carrier-protein]: step 2/2. Functionally, catalyzes the radical-mediated insertion of two sulfur atoms into the C-6 and C-8 positions of the octanoyl moiety bound to the lipoyl domains of lipoate-dependent enzymes, thereby converting the octanoylated domains into lipoylated derivatives. This is Lipoyl synthase from Legionella pneumophila (strain Paris).